The chain runs to 301 residues: Phospholipase A1 (301 aa).

The cysteines at positions 4 and 87 are disulfide-linked. Ser137 acts as the Nucleophile in catalysis. Catalysis depends on Asp165, which acts as the Charge relay system. 2 disulfides stabilise this stretch: Cys176-Cys181 and Cys219-Cys228. Residue His230 is the Charge relay system of the active site. Intrachain disulfides connect Cys245–Cys269, Cys246–Cys294, and Cys262–Cys267.

The protein belongs to the AB hydrolase superfamily. Lipase family. Expressed by the venom gland.

It is found in the secreted. It carries out the reaction a 1,2-diacyl-sn-glycero-3-phosphocholine + H2O = a 2-acyl-sn-glycero-3-phosphocholine + a fatty acid + H(+). Catalyzes the hydrolysis of phosphatidylcholine with phospholipase A1 activity. May act as an allergen and induce hemolytic activity. The sequence is that of Phospholipase A1 from Vespa crabro (European hornet).